The sequence spans 432 residues: Adenylosuccinate synthetase 1 (432 aa).

GTP-binding positions include 12–18 and 40–42; these read GDEGKGR and GHT. The Proton acceptor role is filled by Asp13. Residues Asp13 and Gly40 each coordinate Mg(2+). IMP is bound by residues 13–16, 38–41, Thr128, Arg142, Gln222, Thr237, and Arg301; these read DEGK and NAGH. The Proton donor role is filled by His41. 297–303 serves as a coordination point for substrate; that stretch reads TNTGRPR. Residues Arg303, 329–331, and 411–413 each bind GTP; these read KLD and STG.

It belongs to the adenylosuccinate synthetase family. As to quaternary structure, homodimer. The cofactor is Mg(2+).

It localises to the cytoplasm. The enzyme catalyses IMP + L-aspartate + GTP = N(6)-(1,2-dicarboxyethyl)-AMP + GDP + phosphate + 2 H(+). It functions in the pathway purine metabolism; AMP biosynthesis via de novo pathway; AMP from IMP: step 1/2. Functionally, plays an important role in the de novo pathway of purine nucleotide biosynthesis. Catalyzes the first committed step in the biosynthesis of AMP from IMP. The polypeptide is Adenylosuccinate synthetase 1 (Chromobacterium violaceum (strain ATCC 12472 / DSM 30191 / JCM 1249 / CCUG 213 / NBRC 12614 / NCIMB 9131 / NCTC 9757 / MK)).